A 483-amino-acid polypeptide reads, in one-letter code: AP-3 complex subunit mu (483 aa).

The region spanning 211–482 is the MHD domain; the sequence is NNELYVDLLE…KTQTGNFQVR (272 aa).

Belongs to the adaptor complexes medium subunit family. In terms of assembly, adaptor protein complex 3 (AP-3) is a heterotetramer composed of 2 large adaptins (APL5 and APL6), a medium adaptin (APM3) and a small adaptin (APS3).

Its subcellular location is the golgi apparatus. It is found in the cytoplasmic vesicle membrane. Functionally, part of the AP-3 complex, an adaptor-related complex which is not clathrin-associated. The complex is associated with the Golgi region as well as more peripheral structures. It facilitates the budding of vesicles from the Golgi membrane and may be directly involved in trafficking to the vacuole. Required for the transport via the ALP pathway, which directs the transport of the cargo proteins PHO8 and VAM3 to the vacuole. This Saccharomyces cerevisiae (strain ATCC 204508 / S288c) (Baker's yeast) protein is AP-3 complex subunit mu (APM3).